The sequence spans 286 residues: Protein Bride of doubletime (286 aa).

Interacts with dco (via nuclear localization signal). Interacts with Ankrd49; interaction promotes the stability of both complex members.

The protein localises to the cytoplasm. Its subcellular location is the cytosol. It localises to the cell membrane. Functionally, functions in planar polarity establishment and circadian rhythms by promoting the activity and localization of dco/dbt. Required for regulating the levels of dco/dbt and per in the nuclei of photoreceptor cells and thereby is involved in normal oscillations of the circadian clock proteins in the eye. In the dark, the cry circadian and rhodopsin visual pathways, activate the accumulation of the protein into Arr1- and Arr2-dependent cytosolic foci which are required for dco localization to photoreceptor nuclei. It is possible that the accumulation into foci results in the dissociation of the protein from dco, thus allowing dco to interact with importins and microtubles for nuclear transport. By promoting nuclei localization and kinase activity of dco towards per, it is essential for regulating normal cycles of per nuclear accumulation in brain circadian neurons and thus is important for normal circadian behavior. Essential for regulating the establishment of planar cell polarity in the wing. Forms a complex with Ankrd49 which likely functions in the regulation of planar polarity by promoting the activity of dco during planar polarity establishment. Within the complex, directly promotes dco activity in regulating phosphorylation and asymmetric localization of core planar polarity proteins such as dsh. This chain is Protein Bride of doubletime, found in Drosophila melanogaster (Fruit fly).